Reading from the N-terminus, the 179-residue chain is Hypoxanthine-guanine phosphoribosyltransferase (179 aa).

Diphosphate contacts are provided by lysine 42 and glycine 43. Mg(2+)-binding residues include glutamate 98 and aspartate 99. Glutamate 102 serves as the catalytic Proton acceptor. Residues lysine 130, 151–152 (FV), and aspartate 158 contribute to the GMP site. Arginine 164 is a binding site for diphosphate.

This sequence belongs to the purine/pyrimidine phosphoribosyltransferase family. Mg(2+) serves as cofactor.

The protein localises to the cytoplasm. It carries out the reaction IMP + diphosphate = hypoxanthine + 5-phospho-alpha-D-ribose 1-diphosphate. The catalysed reaction is GMP + diphosphate = guanine + 5-phospho-alpha-D-ribose 1-diphosphate. The protein operates within purine metabolism; IMP biosynthesis via salvage pathway; IMP from hypoxanthine: step 1/1. Its pathway is purine metabolism; GMP biosynthesis via salvage pathway; GMP from guanine: step 1/1. In terms of biological role, purine salvage pathway enzyme that catalyzes the transfer of the ribosyl-5-phosphate group from 5-phospho-alpha-D-ribose 1-diphosphate (PRPP) to the N9 position of the 6-oxopurines hypoxanthine and guanine to form the corresponding ribonucleotides IMP (inosine 5'-monophosphate) and GMP (guanosine 5'-monophosphate), with the release of PPi. The protein is Hypoxanthine-guanine phosphoribosyltransferase (hpt) of Staphylococcus epidermidis (strain ATCC 35984 / DSM 28319 / BCRC 17069 / CCUG 31568 / BM 3577 / RP62A).